The sequence spans 843 residues: Transmembrane protease serine 7 (843 aa).

Residues 1–76 (MDKENSDVSA…KVPFWNVQNK (76 aa)) are Cytoplasmic-facing. The interval 27–67 (AQKKLPVRRPPLPGRRLPLPGRRPPQRPIGKAKPKKQSKKK) is disordered. Residues 56-67 (GKAKPKKQSKKK) show a composition bias toward basic residues. Residues 77 to 97 (IILFTVFLFILAVIAWTLLWL) form a helical; Signal-anchor for type II membrane protein membrane-spanning segment. The Extracellular segment spans residues 98 to 843 (YISKTESKDA…WIHKYVPSLL (746 aa)). In terms of domain architecture, SEA spans 106–234 (DAFYFAGMFR…DSVVLNAGLR (129 aa)). 12 disulfide bridges follow: Cys-247–Cys-273, Cys-299–Cys-322, Cys-365–Cys-396, Cys-484–Cys-496, Cys-491–Cys-509, Cys-503–Cys-518, Cys-525–Cys-544, Cys-538–Cys-553, Cys-559–Cys-571, Cys-566–Cys-585, Cys-579–Cys-594, and Cys-631–Cys-647. CUB domains lie at 247 to 360 (CSQY…FEVI) and 365 to 481 (CENT…YNIS). LDL-receptor class A domains lie at 483-519 (PCPV…LFCV), 517-554 (FCVS…QNCT), and 558-595 (PCNN…EGCT). In terms of domain architecture, Peptidase S1 spans 606 to 840 (IIGGTDTLEG…FVPWIHKYVP (235 aa)). Catalysis depends on charge relay system residues His-646 and Asp-694. 2 disulfide bridges follow: Cys-730/Cys-796 and Cys-762/Cys-775. Ser-790 functions as the Charge relay system in the catalytic mechanism.

It belongs to the peptidase S1 family. As to quaternary structure, forms a heterodimer with SERPINA5. Post-translationally, N-glycosylated. In terms of tissue distribution, expressed in brain, ovary, testis, salivary gland, trachea and lung.

It localises to the cell membrane. Serine protease which preferentially hydrolyzes peptides with Arg at the P1 position. The chain is Transmembrane protease serine 7 (TMPRSS7) from Homo sapiens (Human).